A 185-amino-acid chain; its full sequence is Peptidyl-tRNA hydrolase (185 aa).

F12 lines the tRNA pocket. Catalysis depends on H17, which acts as the Proton acceptor. TRNA-binding residues include Y61, N63, and N109.

This sequence belongs to the PTH family. As to quaternary structure, monomer.

The protein resides in the cytoplasm. It carries out the reaction an N-acyl-L-alpha-aminoacyl-tRNA + H2O = an N-acyl-L-amino acid + a tRNA + H(+). Functionally, hydrolyzes ribosome-free peptidyl-tRNAs (with 1 or more amino acids incorporated), which drop off the ribosome during protein synthesis, or as a result of ribosome stalling. Catalyzes the release of premature peptidyl moieties from peptidyl-tRNA molecules trapped in stalled 50S ribosomal subunits, and thus maintains levels of free tRNAs and 50S ribosomes. This chain is Peptidyl-tRNA hydrolase, found in Borrelia garinii subsp. bavariensis (strain ATCC BAA-2496 / DSM 23469 / PBi) (Borreliella bavariensis).